We begin with the raw amino-acid sequence, 713 residues long: Ribosomal RNA large subunit methyltransferase K/L (713 aa).

The THUMP domain maps to 43–154 (LAYRITLWTR…NGVITIAMNF (112 aa)).

Belongs to the methyltransferase superfamily. RlmKL family.

Its subcellular location is the cytoplasm. The enzyme catalyses guanosine(2445) in 23S rRNA + S-adenosyl-L-methionine = N(2)-methylguanosine(2445) in 23S rRNA + S-adenosyl-L-homocysteine + H(+). It carries out the reaction guanosine(2069) in 23S rRNA + S-adenosyl-L-methionine = N(2)-methylguanosine(2069) in 23S rRNA + S-adenosyl-L-homocysteine + H(+). Functionally, specifically methylates the guanine in position 2445 (m2G2445) and the guanine in position 2069 (m7G2069) of 23S rRNA. The chain is Ribosomal RNA large subunit methyltransferase K/L from Shewanella sp. (strain ANA-3).